The following is a 487-amino-acid chain: UPF0276 protein SAV_2218 (487 aa).

Residues 1-285 (MVEEGTMERL…LGAIRKTLEK (285 aa)) form a UPF0276 region. The tract at residues 286–487 (AGTRAGASAG…RATRRVLLRR (202 aa)) is unknown. The interval 319–348 (AGPRRGGADAQAAPRAAGTEALSAASTSTP) is disordered. Positions 326–348 (ADAQAAPRAAGTEALSAASTSTP) are enriched in low complexity.

It in the N-terminal section; belongs to the UPF0276 family.

The polypeptide is UPF0276 protein SAV_2218 (Streptomyces avermitilis (strain ATCC 31267 / DSM 46492 / JCM 5070 / NBRC 14893 / NCIMB 12804 / NRRL 8165 / MA-4680)).